Reading from the N-terminus, the 156-residue chain is uncharacterized protein (156 aa).

The N-acetyltransferase domain occupies 10-156 (VAARTFPLAC…NDYVMVRELV (147 aa)).

The protein belongs to the acetyltransferase family.

This is an uncharacterized protein from Mycobacterium bovis (strain ATCC BAA-935 / AF2122/97).